The sequence spans 510 residues: Acyl-CoA desaturase 1 (510 aa).

The Cytoplasmic portion of the chain corresponds to 1–112 (MPTSGTTIEL…TLNNWHQHLN (112 aa)). A helical membrane pass occupies residues 113–133 (WLNMVLVCGMPMIGWYFALSG). Over 134–138 (KVPLH) the chain is Lumenal. The chain crosses the membrane as a helical span at residues 139–159 (LNVFLFSVFYYAVGGVSITAG). The Cytoplasmic segment spans residues 160–255 (YHRLWSHRSY…DWTIRFQHRH (96 aa)). Fe cation is bound by residues histidine 161, histidine 166, histidine 198, histidine 201, and histidine 202. Positions 161–166 (HRLWSH) match the Histidine box-1 motif. A Histidine box-2 motif is present at residues 198 to 202 (HRIHH). The helical transmembrane segment at 256–276 (YILLMLLTAFVIPTLICGYFF) threads the bilayer. Topologically, residues 277-280 (NDYM) are lumenal. Residues 281–301 (GGLIYAGFIRVFVIQQATFCI) form a helical membrane-spanning segment. Residues 302–510 (NSLAHYIGTQ…GEIYETGKFF (209 aa)) are Cytoplasmic-facing. Fe cation is bound by residues histidine 306, histidine 335, histidine 338, and histidine 339. The Histidine box-3 motif lies at 335 to 339 (HNFHH). Residues 409–487 (LPMWDKQTFL…LADMRVAVIK (79 aa)) form the Cytochrome b5 heme-binding domain. The heme site is built by histidine 444 and histidine 470.

It belongs to the fatty acid desaturase type 1 family. Fe(2+) serves as cofactor.

It localises to the endoplasmic reticulum membrane. The enzyme catalyses octadecanoyl-CoA + 2 Fe(II)-[cytochrome b5] + O2 + 2 H(+) = (9Z)-octadecenoyl-CoA + 2 Fe(III)-[cytochrome b5] + 2 H2O. The catalysed reaction is hexadecanoyl-CoA + 2 Fe(II)-[cytochrome b5] + O2 + 2 H(+) = (9Z)-hexadecenoyl-CoA + 2 Fe(III)-[cytochrome b5] + 2 H2O. Functionally, stearoyl-CoA desaturase that utilizes O(2) and electrons from reduced cytochrome b5 to introduce the first double bond into saturated fatty acyl-CoA substrates. Catalyzes the insertion of a cis double bond at the delta-9 position into fatty acyl-CoA substrates including palmitoyl-CoA and stearoyl-CoA. Required for the biosynthesis of membrane phospholipids, cholesterol esters and triglycerides. Regulates fatty acid desaturation, that is, the ratio of unsaturated versus saturated fatty acyl chains, by competing with the acyltransferase STC1 for the common substrate C16:0-CoA. SCT1 sequesters C16:0-CoA into lipids, thereby shielding it from desaturation by OLE1. This is Acyl-CoA desaturase 1 (OLE1) from Saccharomyces cerevisiae (strain ATCC 204508 / S288c) (Baker's yeast).